A 365-amino-acid chain; its full sequence is Phospho-N-acetylmuramoyl-pentapeptide-transferase (365 aa).

The next 10 helical transmembrane spans lie at 22-42, 74-94, 95-115, 134-154, 168-188, 201-221, 240-260, 267-287, 292-312, and 342-362; these read YISVRIIMISITSLLITLALG, TMGGVLILSSVIISCLLWGNL, TSIYLWILILVVIFFGAIGFF, KFALQSIFSIVLAIVLFYLLS, SLYIPMGIVIFVVLAFFIING, GLAIVPVVLVAAGLGIYAYIE, LAEVAVFCAAVCGSGLAFLWF, VFMGDVGSLTLGAVLGVIAVM, LIFFIMGLLFVVEALSVMLQV, and KVVIRFWIISLILFLIGFAAI.

The protein belongs to the glycosyltransferase 4 family. MraY subfamily. Mg(2+) serves as cofactor.

It is found in the cell inner membrane. It catalyses the reaction UDP-N-acetyl-alpha-D-muramoyl-L-alanyl-gamma-D-glutamyl-meso-2,6-diaminopimeloyl-D-alanyl-D-alanine + di-trans,octa-cis-undecaprenyl phosphate = di-trans,octa-cis-undecaprenyl diphospho-N-acetyl-alpha-D-muramoyl-L-alanyl-D-glutamyl-meso-2,6-diaminopimeloyl-D-alanyl-D-alanine + UMP. Its pathway is cell wall biogenesis; peptidoglycan biosynthesis. Functionally, catalyzes the initial step of the lipid cycle reactions in the biosynthesis of the cell wall peptidoglycan: transfers peptidoglycan precursor phospho-MurNAc-pentapeptide from UDP-MurNAc-pentapeptide onto the lipid carrier undecaprenyl phosphate, yielding undecaprenyl-pyrophosphoryl-MurNAc-pentapeptide, known as lipid I. This chain is Phospho-N-acetylmuramoyl-pentapeptide-transferase, found in Francisella tularensis subsp. holarctica (strain OSU18).